Reading from the N-terminus, the 450-residue chain is UDP-N-acetylmuramoylalanine--D-glutamate ligase (450 aa).

Gly-119 to Thr-125 contacts ATP.

This sequence belongs to the MurCDEF family.

The protein resides in the cytoplasm. It catalyses the reaction UDP-N-acetyl-alpha-D-muramoyl-L-alanine + D-glutamate + ATP = UDP-N-acetyl-alpha-D-muramoyl-L-alanyl-D-glutamate + ADP + phosphate + H(+). The protein operates within cell wall biogenesis; peptidoglycan biosynthesis. In terms of biological role, cell wall formation. Catalyzes the addition of glutamate to the nucleotide precursor UDP-N-acetylmuramoyl-L-alanine (UMA). This is UDP-N-acetylmuramoylalanine--D-glutamate ligase from Streptococcus thermophilus (strain CNRZ 1066).